A 268-amino-acid polypeptide reads, in one-letter code: MNAITNFLRKKNSSCALIPFITAGYPNIDICIKALKVLDREGADLIELGIPYSDALADGPIIQEASQAALKQGIYIEQVLSILTKVIPDLHAPIIIFTYYNPVLVRGVDKFICEISQAGAKGLIIPDLPLEEVDYILELCNLYSIELILFVAPTSSQSRIQLIASKSPGCIYLVSSCGVTGLRDNFDVKIQHLANNIKSTTNKLIMLGFGINNPDQISQIINWNIDGIVVGSAIITHIVGELPQDMLNSLAHFCKKLKYSIHTASNVK.

Catalysis depends on proton acceptor residues glutamate 47 and aspartate 58.

The protein belongs to the TrpA family. Tetramer of two alpha and two beta chains.

Its subcellular location is the plastid. It localises to the chloroplast. It catalyses the reaction (1S,2R)-1-C-(indol-3-yl)glycerol 3-phosphate + L-serine = D-glyceraldehyde 3-phosphate + L-tryptophan + H2O. Its pathway is amino-acid biosynthesis; L-tryptophan biosynthesis; L-tryptophan from chorismate: step 5/5. Functionally, the alpha subunit is responsible for the aldol cleavage of indoleglycerol phosphate to indole and glyceraldehyde 3-phosphate. The polypeptide is Tryptophan synthase alpha chain (Gracilaria tenuistipitata var. liui (Red alga)).